Reading from the N-terminus, the 218-residue chain is Putative copper transporter crmD (218 aa).

Transmembrane regions (helical) follow at residues 37–57 (YSLT…LGVL) and 176–196 (MLAV…GIVV).

This sequence belongs to the copper transporter (Ctr) (TC 1.A.56) family. SLC31A subfamily.

It is found in the membrane. The enzyme catalyses Cu(2+)(in) = Cu(2+)(out). Its function is as follows. Putative copper transporter; part of the crm gene cluster that mediates the biosynthesis of a yet unidentified copper-responsive metabolite. Probably involved in the transport of copper, even if it does not act as a major copper transporter. In contrast to crmA, is not involved in the biosynthesis of fumivalines or fumicicolins. This is Putative copper transporter crmD from Aspergillus fumigatus (strain ATCC MYA-4609 / CBS 101355 / FGSC A1100 / Af293) (Neosartorya fumigata).